An 883-amino-acid chain; its full sequence is uncharacterized protein (883 aa).

Residues 258–373 (INNQSDNQSN…NQFNKPDNEP (116 aa)) form a disordered region. Composition is skewed to low complexity over residues 259 to 268 (NNQSDNQSNS), 277 to 317 (EPNG…SNSE), and 324 to 333 (NEPNTEPNTE). The span at 334-347 (SNGQSNSELNNQSD) shows a compositional bias: polar residues. The span at 348–368 (NHPNNEPNSEPNNEPNNQFNK) shows a compositional bias: low complexity.

The protein belongs to the mimivirus L137 family.

This is an uncharacterized protein from Acanthamoeba polyphaga mimivirus (APMV).